Reading from the N-terminus, the 288-residue chain is 4-hydroxybenzoate octaprenyltransferase (288 aa).

6 consecutive transmembrane segments (helical) span residues 20-40 (IGTLLLLWPCLMALTFAAGGL), 43-63 (LKVFIIFVIGVFSMRACGCII), 96-116 (LFVVMALFSFGLVLMLNPLVV), 210-230 (QIIGLFQLAALSCFIIAGMVA), 234-254 (AIYAVGILAFIGFGLYQQKLI), and 262-282 (CFTAFLNNNWAGMVLFTALML).

Belongs to the UbiA prenyltransferase family. The cofactor is Mg(2+).

The protein localises to the cell inner membrane. The catalysed reaction is all-trans-octaprenyl diphosphate + 4-hydroxybenzoate = 4-hydroxy-3-(all-trans-octaprenyl)benzoate + diphosphate. Its pathway is cofactor biosynthesis; ubiquinone biosynthesis. In terms of biological role, catalyzes the prenylation of para-hydroxybenzoate (PHB) with an all-trans polyprenyl group. Mediates the second step in the final reaction sequence of ubiquinone-8 (UQ-8) biosynthesis, which is the condensation of the polyisoprenoid side chain with PHB, generating the first membrane-bound Q intermediate 3-octaprenyl-4-hydroxybenzoate. This Shewanella pealeana (strain ATCC 700345 / ANG-SQ1) protein is 4-hydroxybenzoate octaprenyltransferase.